Consider the following 1303-residue polypeptide: Ninein-like protein (1303 aa).

EF-hand domains follow at residues Arg8–Asp43 and Arg61–Arg77. Residues Thr107–Asp135 are disordered. EF-hand domains lie at Val203–Lys238 and Leu240–His275. Positions 253, 255, 257, 259, and 264 each coordinate Ca(2+). Residues Glu464–Gln590 adopt a coiled-coil conformation. Polar residues predominate over residues Ser592 to Glu617. Residues Ser592–Arg634 are disordered. Coiled-coil stretches lie at residues Glu660 to Glu791, Leu821 to Arg876, and Ser919 to Gln1146. The interval Glu1156–Gln1181 is disordered. The segment covering Gly1159–Glu1175 has biased composition (polar residues). Residues Gln1202–Lys1278 adopt a coiled-coil conformation.

The protein resides in the cytoplasm. The protein localises to the cytoskeleton. It is found in the microtubule organizing center. It localises to the centrosome. In terms of biological role, required for the intracellular transport of organelles and vesicles, and is essential for the photoreceptor's outer segments formation, maintenance and function. In Danio rerio (Zebrafish), this protein is Ninein-like protein (Ninl).